An 819-amino-acid chain; its full sequence is Tegument protein UL47 homolog (819 aa).

Basic residues predominate over residues 1-15 (MQSGHYNRRQSRRQR). Disordered stretches follow at residues 1-42 (MQSG…THPP) and 58-221 (LNSE…DYFS). Residues 11-31 (SRRQRISSNTTDSPRHTHGTR) carry the Nuclear localization signal motif. The segment covering 32–42 (YRSTNWYTHPP) has biased composition (polar residues). Over residues 62–72 (MDQDSSSDASD) the composition is skewed to acidic residues. The span at 82-93 (STYNGSEQNTST) shows a compositional bias: polar residues. Residues 94-109 (SRHENRIFKLTEREAN) are compositionally biased toward basic and acidic residues. A run of 5 repeats spans residues 117 to 132 (DAIDDEGEAEEGEAEE), 133 to 148 (DAIDDEGEAEEGEAEE), 149 to 164 (DAIDDEGEAEEGEAEE), 165 to 190 (DAIDDEGEAEEGEAEEGEAEEGEAEE), and 191 to 206 (DAIDDEGEAEEDAAEE). The tract at residues 117–218 (DAIDDEGEAE…IDDEGEAEED (102 aa)) is 6 X 16 AA approximate tandem repeats. The segment covering 118–219 (AIDDEGEAEE…DDEGEAEEDY (102 aa)) has biased composition (acidic residues). One copy of the 1-6; truncated repeat lies at 207 to 218 (DAIDDEGEAEED). Positions 785–807 (QPIPSVDLAENLMQYRNEILGLD) match the Nuclear export signal motif.

This sequence belongs to the alphaherpesvirinae HHV-1 UL47 family. As to quaternary structure, interacts with US3 kinase. Interacts with ORF24 and ORF27; these interactions seem important for efficient virion nuclear egress. Interacts with ORF17/VHS. Interacts with ORF9. In terms of processing, phosphorylated by US3. This phosphorylation is required for proper nuclear localization.

The protein localises to the virion tegument. Its subcellular location is the host nucleus. It is found in the host cytoplasm. Its function is as follows. Tegument protein that can bind to various RNA transcripts. Plays a role in the attenuation of selective viral and cellular mRNA degradation by modulating the activity of host shutoff RNase ORF17/VHS. Also plays a role in the primary envelopment of virions in the perinuclear space, probably by interacting with two nuclear egress proteins ORF24 and ORF27. The protein is Tegument protein UL47 homolog of Varicella-zoster virus (strain Dumas) (HHV-3).